A 124-amino-acid chain; its full sequence is Glycine cleavage system H protein (124 aa).

The 82-residue stretch at 22-103 (VFVVGITDNA…AYTAWIFKIK (82 aa)) folds into the Lipoyl-binding domain. N6-lipoyllysine is present on Lys63.

The protein belongs to the GcvH family. The glycine cleavage system is composed of four proteins: P, T, L and H. It depends on (R)-lipoate as a cofactor.

Functionally, the glycine cleavage system catalyzes the degradation of glycine. The H protein shuttles the methylamine group of glycine from the P protein to the T protein. This chain is Glycine cleavage system H protein, found in Bordetella pertussis (strain Tohama I / ATCC BAA-589 / NCTC 13251).